Here is a 3477-residue protein sequence, read N- to C-terminus: MANRRVGRGCWEVSPTERRPPAGLRGPAAEEEASSPPVLSLSHFCRSPFLCFGDVLLGASRTLSLALDNPNEEVAEVKISHFPAADLGFSVSQRCFVLQPKEKIVISVNWTPLKEGRVREIMTFLVNDVLKHQAILLGNAEEQKKKKRSLWDTIKKKKISASTSHNRRVSNIQNVNKTFSVSQKVDRVRSPLQACENLAMNEGGPPTENNSLILEENKIPISPISPAFNECHGATCLPLSVRRSTTYSSLHASENRELLNVHSANVSKVSFNEKAVTETSFNSVNVNGQRGENSKLSLTPNCSSTLNITQSQIHFLSPDSFVNNSHGANNELELVTCLSSDMFMKDNSQPVHLESTIAHEIYQKILSPDSFIKDNYGLNQDLESESVNPILSPNQFLKDNMAYMCTSQQTCKVPLSNENSQVPQSPEDWRKSEVSPRIPECQGSKSPKAIFEELVEMKSNYYSFIKQNNPKFSAVQDISSHSHNKQPKRRPILSATVTKRKATCTRENQTEINKPKAKRCLNSAVGEHEKVINNQKEKEDFHSYLPIIDPILSKSKSYKNEVTPSSTTASVARKRKSDGSMEDANVRVAITEHTEVREIKRIHFSPSEPKTSAVKKTKNVTTPISKRISNREKLNLKKKTDLSIFRTPISKTNKRTKPIIAVAQSSLTFIKPLKTDIPRHPMPFAAKNMFYDERWKEKQEQGFTWWLNFILTPDDFTVKTNISEVNAATLLLGIENQHKISVPRAPTKEEMSLRAYTARCRLNRLRRAACRLFTSEKMVKAIKKLEIEIEARRLIVRKDRHLWKDVGERQKVLNWLLSYNPLWLRIGLETTYGELISLEDNSDVTGLAMFILNRLLWNPDIAAEYRHPTVPHLYRDGHEEALSKFTLKKLLLLVCFLDYAKISRLIDHDPCLFCKDAEFKASKEILLAFSRDFLSGEGDLSRHLGLLGLPVNHVQTPFDEFDFAVTNLAVDLQCGVRLVRTMELLTQNWDLSKKLRIPAISRLQKMHNVDIVLQVLKSRGIELSDEHGNTILSKDIVDRHREKTLRLLWKIAFAFQVDISLNLDQLKEEIAFLKHTKSIKKTISLLSCHSDDLINKKKGKRDSGSFEQYSENIKLLMDWVNAVCAFYNKKVENFTVSFSDGRVLCYLIHHYHPCYVPFDAICQRTTQTVECTQTGSVVLNSSSESDDSSLDMSLKAFDHENTSELYKELLENEKKNFHLVRSAVRDLGGIPAMINHSDMSNTIPDEKVVITYLSFLCARLLDLRKEIRAARLIQTTWRKYKLKTDLKRHQEREKAARIIQLAVINFLAKQRLRKRVNAALVIQKYWRRVLAQRKLLMLKKEKLEKVQNKAASLIQGYWRRYSTRQRFLKLKYYSIILQSRIRMIIAVTSYKRYLWATVTIQRHWRAYLRRKQDQQRYEMLKSSTLIIQSMFRKWKQRKMQSQVKATVILQRAFREWHLRKQAKEENSAIIIQSWYRMHKELRKYIYIRSCVVIIQKRFRCFQAQKLYKRRKESILTIQKYYKAYLKGKIERTNYLQKRAAAIQLQAAFRRLKAHNLCRQIRAACVIQSYWRMRQDRVRFLNLKKTIIKFQAHVRKHQQRQKYKKMKKAAVIIQTHFRAYIFAMKVLASYQKTRSAVIVLQSAYRGMQARKMYIHILTSVIKIQSYYRAYVSKKEFLSLKNATIKLQSTVKMKQTRKQYLHLRAAALFIQQCYRSKKIAAQKREEYMQMRESCIKLQAFVRGYLVRKQMRLQRKAVISLQSYFRMRKARQYYLKMYKAIIVIQNYYHAYKAQVNQRKNFLQVKKAATCLQAAYRGYKVRQLIKQQSIAALKIQSAFRGYNKRVKYQSVLQSIIKIQRWYRAYKTLHDTRTHFLKTKAAVISLQSAYRGWKVRKQIRREHQAALKIQSAFRMAKAQKQFRLFKTAALVIQQNFRAWTAGRKQCMEYIELRHAVLVLQSMWKGKTLRRQLQRQHKCAIIIQSYYRMHVQQKKWKIMKKAALLIQKYYRAYSIGREQNHLYLKTKAAVVTLQSAYRGMKVRKRIKDCNKAAVTIQSKYRAYKTKKKYATYRASAIIIQRWYRGIKITNHQHKEYLNLKKTAIKIQSVYRGIRVRRHIQHMHRAATFIKAMFKMHQSRISYHTMRKAAIVIQVRCRAYYQGKMQREKYLTILKAVKVLQASFRGVRVRRTLRKMQTAATLIQSNYRRYRQQTYFNKLKKITKTVQQRYWAMKERNIQFQRYNKLRHSVIYIQAIFRGKKARRHLKMMHIAATLIQRRFRTLMMRRRFLSLKKTAILIQRKYRAHLCTKHHLQFLQVQNAVIKIQSSYRRWMIRKRMREMHRAATFIQSTFRMHRLHMRYQALKQASVVIQQQYQANRAAKLQRQHYLRQRHSAVILQAAFRGMKTRRHLKSMHSSATLIQSRFRSLLVRRRFISLKKATIFVQRKYRATICAKHKLYQFLHLRKAAITIQSSYRRLMVKKKLQEMQRAAVLIQATFRMYRTYITFQTWKHASILIQQHYRTYRAAKLQRENYIRQWHSAVVIQAAYKGMKARQLLREKHKASIVIQSTYRMYRQYCFYQKLQWATKIIQEKYRANKKKQKVFQHNELKKETCVQAGFQDMNIKKQIQEQHQAAIIIQKHCKAFKIRKHYLHLRATVVSIQRRYRKLTAVRTQAVICIQSYYRGFKVRKDIQNMHRAATLIQSFYRMHRAKVDYETKKTAIVVIQNYYRLYVRVKTERKNFLAVQKSVRTIQAAFRGMKVRQKLKNVSEEKMAAIVNQSALCCYRSKTQYEAVQSEGVMIQEWYKASGLACSQEAEYHSQSRAAVTIQKAFCRMVTRKLETQKCAALRIQFFLQMAVYRRRFVQQKRAAITLQHYFRTWQTRKQFLLYRKAAVVLQNHYRAFLSAKHQRQVYLQIRSSVIIIQARSKGFIQKRKFQEIKNSTIKIQAMWRRYRAKKYLCKVKAACKIQAWYRCWRAHKEYLAILKAVKIIQGCFYTKLERTRFLNVRASAIIIQRKWRAILPAKIAHEHFLMIKRHRAACLIQAHYRGYKGRQVFLRQKSAALIIQKYIRAREAGKHERIKYIEFKKSTVILQALVRGWLVRKRFLEQRAKIRLLHFTAAAYYHLNAVRIQRAYKLYLAVKNANKQVNSVICIQRWFRARLQEKRFIQKYHSIKKIEHEGQECLSQRNRAASVIQKAVRHFLLRKKQEKFTSGIIKIQALWRGYSWRKKNDCTKIKAIRLSLQVVNREIREENKLYKRTALALHYLLTYKHLSAILEALKHLEVVTRLSPLCCENMAQSGAISKIFVLIRSCNRSIPCMEVIRYAVQVLLNVSKYEKTTSAVYDVENCIDILLELLQIYREKPGNKVADKGGSIFTKTCCLLAILLKTTNRASDVRSRSKVVDRIYSLYKLTAHKHKMNTERILYKQKKNSSISIPFIPETPVRTRIVSRLKPDWVLRRDNMEEITNPLQAIQMVMDTLGIPY.

The interval 1–30 (MANRRVGRGCWEVSPTERRPPAGLRGPAAE) is disordered. Phosphoserine occurs at positions 280, 283, 367, and 392. Residues 308 to 409 (ITQSQIHFLS…NMAYMCTSQQ (102 aa)) form a sufficient for interaction with KATNA1:KATNB1 region. Residues 415–424 (LSNENSQVPQ) are compositionally biased toward polar residues. Disordered stretches follow at residues 415-443 (LSNE…ECQG) and 559-581 (KNEV…DGSM). The residue at position 425 (serine 425) is a Phosphoserine. Residues 560–570 (NEVTPSSTTAS) show a composition bias toward polar residues. Serine 605 is modified (phosphoserine). Residues 920-1056 (KASKEILLAF…LLWKIAFAFQ (137 aa)) form the Calponin-homology (CH) 1 domain. The stretch at 1057–1078 (VDISLNLDQLKEEIAFLKHTKS) forms a coiled coil. Position 1103 is a phosphoserine (serine 1103). The Calponin-homology (CH) 2 domain maps to 1110-1261 (SENIKLLMDW…YLSFLCARLL (152 aa)). IQ domains follow at residues 1347–1378 (QNKA…IILQ), 1393–1422 (YLWA…MLKS), 1582–1613 (LKKT…VIIQ), 1632–1661 (TRSA…SVIK), 1655–1684 (ILTS…ATIK), 1728–1757 (MRES…AVIS), 1751–1782 (QRKA…IVIQ), 1801–1830 (VKKA…AALK), 1824–1853 (QSIA…SIIK), 1874–1903 (TKAA…AALK), 1897–1928 (EHQA…LVIQ), 1947–1978 (LRHA…IIIQ), 1970–2001 (QHKC…LLIQ), 2020–2049 (TKAA…AAVT), 2043–2074 (CNKA…IIIQ), 2093–2124 (LKKT…TFIK), 2116–2147 (MHRA…IVIQ), 2166–2197 (ILKA…TLIQ), 2189–2218 (MQTA…ITKT), 2239–2270 (LRHS…TLIQ), 2262–2293 (MHIA…ILIQ), 2311–2342 (VQNA…TFIQ), 2334–2365 (MHRA…VVIQ), 2384–2415 (QRHS…TLIQ), 2407–2438 (MHSS…IFVQ), 2457–2488 (LRKA…VLIQ), 2530–2561 (QWHS…IVIQ), 2624–2653 (QHQA…TVVS), 2665–2696 (RTQA…TLIQ), 2688–2719 (MHRA…VVIQ), 2738–2767 (VQKS…EKMA), 2859–2890 (QKRA…VVLQ), 2909–2938 (IRSS…STIK), 2932–2963 (IKNS…KIQA), 2954–2985 (KVKA…KIIQ), 3029–3060 (RHRA…LIIQ), 3079–3110 (FKKS…RLLH), 3181–3210 (RNRA…GIIK), and 3204–3235 (FTSG…IRLS).

Interacts with KATNA1 and KATNB1; katanin complex formation KATNA1:KATNB1 is required for the association.

The protein localises to the cytoplasm. The protein resides in the cytoskeleton. It is found in the spindle. Its subcellular location is the nucleus. In terms of biological role, involved in mitotic spindle regulation and coordination of mitotic processes. The function in regulating microtubule dynamics at spindle poles including spindle orientation, astral microtubule density and poleward microtubule flux seems to depend on the association with the katanin complex formed by KATNA1 and KATNB1. Enhances the microtubule lattice severing activity of KATNA1 by recruiting the katanin complex to microtubules. Can block microtubule minus-end growth and reversely this function can be enhanced by the katanin complex. May have a preferential role in regulating neurogenesis. The chain is Abnormal spindle-like microcephaly-associated protein (ASPM) from Homo sapiens (Human).